Consider the following 335-residue polypeptide: Nucleoid-associated protein YejK (335 aa).

The protein belongs to the YejK family.

It localises to the cytoplasm. It is found in the nucleoid. This chain is Nucleoid-associated protein YejK, found in Shigella dysenteriae serotype 1 (strain Sd197).